The following is a 158-amino-acid chain: Cytosine deaminase (158 aa).

One can recognise a CMP/dCMP-type deaminase domain in the interval 9–129; the sequence is KWDQKGMDIA…KYLQTRGHEV (121 aa). Asparagine 51 contributes to the substrate binding site. Zn(2+) is bound at residue histidine 62. Glutamate 64 serves as the catalytic Proton donor. 2 residues coordinate Zn(2+): cysteine 91 and cysteine 94. Substrate is bound at residue aspartate 155.

This sequence belongs to the cytidine and deoxycytidylate deaminase family. In terms of assembly, homodimer. Zn(2+) is required as a cofactor.

It localises to the cytoplasm. Its subcellular location is the nucleus. The enzyme catalyses cytosine + H2O + H(+) = uracil + NH4(+). It participates in pyrimidine metabolism; UMP biosynthesis via salvage pathway; uracil from cytosine: step 1/1. In terms of biological role, catalyzes the hydrolytic deamination of cytosine to uracil or 5-methylcytosine to thymine. Is involved in the pyrimidine salvage pathway, which allows the cell to utilize cytosine for pyrimidine nucleotide synthesis. This is Cytosine deaminase from Saccharomyces cerevisiae (strain ATCC 204508 / S288c) (Baker's yeast).